The primary structure comprises 531 residues: T-complex protein 1 subunit zeta (531 aa).

Alanine 2 is subject to N-acetylalanine. Lysine 5 is subject to N6-acetyllysine. Glycine 39 serves as a coordination point for ADP. Glycine 39 is an ATP binding site. Aspartate 90 serves as a coordination point for Mg(2+). Residues glycine 91, threonine 92, threonine 93, serine 94, threonine 158, and lysine 159 each coordinate ADP. ATP-binding residues include glycine 91, threonine 92, and threonine 93. An N6-acetyllysine modification is found at lysine 199. Serine 205 carries the post-translational modification Phosphoserine. Lysine 251 participates in a covalent cross-link: Glycyl lysine isopeptide (Lys-Gly) (interchain with G-Cter in SUMO2). N6-acetyllysine occurs at positions 287, 365, 377, and 388. ADP is bound at residue alanine 411. ATP contacts are provided by alanine 411, glycine 412, aspartate 496, and lysine 501. ADP is bound at residue aspartate 496.

Belongs to the TCP-1 chaperonin family. Component of the chaperonin-containing T-complex (TRiC), a hexadecamer composed of two identical back-to-back stacked rings enclosing a protein folding chamber. Each ring is made up of eight different subunits: TCP1/CCT1, CCT2, CCT3, CCT4, CCT5, CCT6A/CCT6, CCT7, CCT8. Interacts with PACRG.

It localises to the cytoplasm. The catalysed reaction is ATP + H2O = ADP + phosphate + H(+). Functionally, component of the chaperonin-containing T-complex (TRiC), a molecular chaperone complex that assists the folding of actin, tubulin and other proteins upon ATP hydrolysis. The TRiC complex mediates the folding of WRAP53/TCAB1, thereby regulating telomere maintenance. The chain is T-complex protein 1 subunit zeta (CCT6A) from Homo sapiens (Human).